The following is an 87-amino-acid chain: Tektin-2 (87 aa).

Residues V26–L55 are a coiled coil.

The protein belongs to the tektin family. Microtubule inner protein component of sperm flagellar doublet microtubules. May interact with CCDC172. Tyrosine phosphorylated. Post-translationally, ubiquitinated, leading to its degradation. Deubiquitinated by USP16, promoting its stability. Detected in sperm flagella (at protein level).

It is found in the cytoplasm. Its subcellular location is the cytoskeleton. It localises to the cilium axoneme. The protein localises to the flagellum axoneme. The protein resides in the microtubule organizing center. Microtubule inner protein (MIP) part of the dynein-decorated doublet microtubules (DMTs) in cilia and flagellar axoneme. Plays a key role in the assembly or attachment of the inner dynein arm to microtubules in sperm flagella and tracheal cilia. Forms filamentous polymers in the walls of ciliary and flagellar microtubules. This is Tektin-2 from Mesocricetus auratus (Golden hamster).